The chain runs to 607 residues: Serine/threonine-protein kinase sid2 (607 aa).

Residues Ser56, Ser60, Ser65, and Ser86 each carry the phosphoserine modification. Over residues 93–108 the composition is skewed to basic and acidic residues; sequence DRSGELSYKDNNHWSD. A disordered region spans residues 93–118; that stretch reads DRSGELSYKDNNHWSDRSSTGSPRWE. Residues 109 to 118 show a composition bias toward polar residues; sequence RSSTGSPRWE. A Protein kinase domain is found at 208 to 508; that stretch reads FQTITQVGQG…LKQVMQHPYF (301 aa). Residues 214–222 and Lys237 contribute to the ATP site; that span reads VGQGGYGSV. At Tyr219 the chain carries Phosphotyrosine. The active-site Proton acceptor is Asp331. Ser402 carries the post-translational modification Phosphoserine. In terms of domain architecture, AGC-kinase C-terminal spans 509-589; that stretch reads SKIDWKNVRT…RHQKNSHPTS (81 aa). The tract at residues 586-607 is disordered; it reads HPTSSSSALSSPLSAPSFGTLL. A compositionally biased stretch (low complexity) spans 589-607; it reads SSSSALSSPLSAPSFGTLL.

It belongs to the protein kinase superfamily. Ser/Thr protein kinase family. As to quaternary structure, interacts with mob1 and cdc11.

It is found in the cytoplasm. The protein resides in the cytoskeleton. The protein localises to the microtubule organizing center. It localises to the spindle pole body. It carries out the reaction L-seryl-[protein] + ATP = O-phospho-L-seryl-[protein] + ADP + H(+). The catalysed reaction is L-threonyl-[protein] + ATP = O-phospho-L-threonyl-[protein] + ADP + H(+). Its function is as follows. Part of a signaling pathway. Required for initiation of medial ring constriction and septation. The polypeptide is Serine/threonine-protein kinase sid2 (sid2) (Schizosaccharomyces pombe (strain 972 / ATCC 24843) (Fission yeast)).